Reading from the N-terminus, the 790-residue chain is uncharacterized protein (790 aa).

The region spanning 37–172 is the TBDR plug domain; the sequence is APVPVPVNGN…NGGVIDAKIK (136 aa). Positions 178-790 constitute a TBDR beta-barrel domain; sequence DSKVKLGYRT…TFWLDVSMKF (613 aa).

Belongs to the TonB-dependent receptor family.

It is found in the cell outer membrane. This is an uncharacterized protein from Escherichia coli (strain K12).